Reading from the N-terminus, the 554-residue chain is Glutamine--tRNA ligase (554 aa).

The 'HIGH' region motif lies at 34-44 (PEPNGYLHIGH). ATP is bound by residues 35 to 37 (EPN) and 41 to 47 (HIGHAKS). The L-glutamine site is built by Asp-67 and Tyr-212. ATP contacts are provided by residues Thr-231, 261–262 (RL), and 269–271 (MSK). The 'KMSKS' region signature appears at 268–272 (IMSKR).

Belongs to the class-I aminoacyl-tRNA synthetase family. As to quaternary structure, monomer.

Its subcellular location is the cytoplasm. It catalyses the reaction tRNA(Gln) + L-glutamine + ATP = L-glutaminyl-tRNA(Gln) + AMP + diphosphate. This is Glutamine--tRNA ligase from Serratia proteamaculans (strain 568).